The primary structure comprises 429 residues: Threonine synthase (429 aa).

An N6-(pyridoxal phosphate)lysine modification is found at Lys-108.

This sequence belongs to the threonine synthase family. Pyridoxal 5'-phosphate serves as cofactor.

The catalysed reaction is O-phospho-L-homoserine + H2O = L-threonine + phosphate. Its pathway is amino-acid biosynthesis; L-threonine biosynthesis; L-threonine from L-aspartate: step 5/5. Functionally, catalyzes the gamma-elimination of phosphate from L-phosphohomoserine and the beta-addition of water to produce L-threonine. This chain is Threonine synthase (thrC), found in Buchnera aphidicola subsp. Schizaphis graminum (strain Sg).